A 274-amino-acid chain; its full sequence is Orotidine 5'-phosphate decarboxylase (274 aa).

Lys95 acts as the Proton donor in catalysis.

It belongs to the OMP decarboxylase family. Type 2 subfamily.

It carries out the reaction orotidine 5'-phosphate + H(+) = UMP + CO2. It functions in the pathway pyrimidine metabolism; UMP biosynthesis via de novo pathway; UMP from orotate: step 2/2. This is Orotidine 5'-phosphate decarboxylase from Paracidovorax citrulli (strain AAC00-1) (Acidovorax citrulli).